A 242-amino-acid polypeptide reads, in one-letter code: Glucosamine-6-phosphate deaminase (242 aa).

The active-site Proton acceptor; for enolization step is the D67. N136 serves as the catalytic For ring-opening step. Catalysis depends on H138, which acts as the Proton acceptor; for ring-opening step. The For ring-opening step role is filled by E143.

Belongs to the glucosamine/galactosamine-6-phosphate isomerase family. NagB subfamily.

It catalyses the reaction alpha-D-glucosamine 6-phosphate + H2O = beta-D-fructose 6-phosphate + NH4(+). It functions in the pathway amino-sugar metabolism; N-acetylneuraminate degradation; D-fructose 6-phosphate from N-acetylneuraminate: step 5/5. In terms of biological role, catalyzes the reversible isomerization-deamination of glucosamine 6-phosphate (GlcN6P) to form fructose 6-phosphate (Fru6P) and ammonium ion. This Alkaliphilus metalliredigens (strain QYMF) protein is Glucosamine-6-phosphate deaminase.